A 196-amino-acid chain; its full sequence is MIIKSSEYAVSAVKEEQYPKDNLPEIALAGRSNVGKSSLINTLLKRKNLARTSSQPGKTQTLNFYLVNDDFYLVDVPGYGYAKVSQKRRQEFGEMIQDYLETRPNLKGLIILIDSRHEPTKDDISMYEYAQYLNIPILVVCTKMDKIKKNQTNKVMTGLRKKLDLNYDHVTVLTFSSVTKFHVTELGNWIEDKISQ.

One can recognise an EngB-type G domain in the interval 22-196 (NLPEIALAGR…GNWIEDKISQ (175 aa)). Residues 30–37 (GRSNVGKS), 57–61 (GKTQT), 75–78 (DVPG), 142–145 (TKMD), and 175–177 (FSS) each bind GTP. Mg(2+)-binding residues include Ser-37 and Thr-59.

This sequence belongs to the TRAFAC class TrmE-Era-EngA-EngB-Septin-like GTPase superfamily. EngB GTPase family. Requires Mg(2+) as cofactor.

In terms of biological role, necessary for normal cell division and for the maintenance of normal septation. The sequence is that of Probable GTP-binding protein EngB from Lactobacillus acidophilus (strain ATCC 700396 / NCK56 / N2 / NCFM).